We begin with the raw amino-acid sequence, 87 residues long: MRSMAKKGLEEVLETLDRIIHDETVPRNVRRVASEIKEKLTTTDEVSLEAASAISVLEDISADPNLPMHVRTMIWNLTSQLERISVE.

Belongs to the UPF0147 family.

This is UPF0147 protein AF_2370.1 from Archaeoglobus fulgidus (strain ATCC 49558 / DSM 4304 / JCM 9628 / NBRC 100126 / VC-16).